Reading from the N-terminus, the 461-residue chain is Secreted 45 kDa protein (461 aa).

Positions 1-27 (MKKKIISAILMSTVILSAAAPLSGVYA) are cleaved as a signal peptide. Positions 264 to 329 (SSASASSSQA…GNTNSGTSTG (66 aa)) are enriched in low complexity. A disordered region spans residues 264 to 343 (SSASASSSQA…TTTGGSGINS (80 aa)). Residues 330–340 (NTGGTTTGGSG) show a composition bias toward gly residues. The Peptidase C51 domain maps to 330–459 (NTGGTTTGGS…VSASGVTFLM (130 aa)).

This chain is Secreted 45 kDa protein (usp45), found in Lactococcus lactis subsp. cremoris (strain MG1363).